We begin with the raw amino-acid sequence, 669 residues long: DNA ligase (669 aa).

NAD(+)-binding positions include 34–38, 83–84, and E114; these read DAEYD and SL. K116 functions as the N6-AMP-lysine intermediate in the catalytic mechanism. 4 residues coordinate NAD(+): R137, E171, K287, and K311. Positions 405, 408, 423, and 428 each coordinate Zn(2+). A BRCT domain is found at 591 to 669; it reads NVESYFAGKT…EERFLQELNK (79 aa).

It belongs to the NAD-dependent DNA ligase family. LigA subfamily. The cofactor is Mg(2+). Mn(2+) is required as a cofactor.

It carries out the reaction NAD(+) + (deoxyribonucleotide)n-3'-hydroxyl + 5'-phospho-(deoxyribonucleotide)m = (deoxyribonucleotide)n+m + AMP + beta-nicotinamide D-nucleotide.. Functionally, DNA ligase that catalyzes the formation of phosphodiester linkages between 5'-phosphoryl and 3'-hydroxyl groups in double-stranded DNA using NAD as a coenzyme and as the energy source for the reaction. It is essential for DNA replication and repair of damaged DNA. The polypeptide is DNA ligase (Bacillus mycoides (strain KBAB4) (Bacillus weihenstephanensis)).